Here is a 124-residue protein sequence, read N- to C-terminus: Small ribosomal subunit protein bS6 (124 aa).

The interval 96 to 124 is disordered; sequence ETGPSPMMKEVQREEAKKSAATQPSEAQA. Polar residues predominate over residues 115–124; sequence AATQPSEAQA.

The protein belongs to the bacterial ribosomal protein bS6 family.

Functionally, binds together with bS18 to 16S ribosomal RNA. The chain is Small ribosomal subunit protein bS6 from Paraburkholderia phytofirmans (strain DSM 17436 / LMG 22146 / PsJN) (Burkholderia phytofirmans).